We begin with the raw amino-acid sequence, 390 residues long: Glutamyl-tRNA reductase (390 aa).

Substrate contacts are provided by residues 46–49 (TCNR), Ser-96, 101–103 (EAQ), and Gln-107. Cys-47 functions as the Nucleophile in the catalytic mechanism. Residue 176 to 181 (GAGEMA) participates in NADP(+) binding.

The protein belongs to the glutamyl-tRNA reductase family. Homodimer.

It catalyses the reaction (S)-4-amino-5-oxopentanoate + tRNA(Glu) + NADP(+) = L-glutamyl-tRNA(Glu) + NADPH + H(+). The protein operates within porphyrin-containing compound metabolism; protoporphyrin-IX biosynthesis; 5-aminolevulinate from L-glutamyl-tRNA(Glu): step 1/2. Its function is as follows. Catalyzes the NADPH-dependent reduction of glutamyl-tRNA(Glu) to glutamate 1-semialdehyde (GSA). This Thermus thermophilus (strain ATCC 27634 / DSM 579 / HB8) protein is Glutamyl-tRNA reductase.